Consider the following 310-residue polypeptide: Ribosomal RNA small subunit methyltransferase H (310 aa).

S-adenosyl-L-methionine contacts are provided by residues 32–34 (AGH), aspartate 51, phenylalanine 84, aspartate 102, and glutamine 109.

This sequence belongs to the methyltransferase superfamily. RsmH family.

It is found in the cytoplasm. It carries out the reaction cytidine(1402) in 16S rRNA + S-adenosyl-L-methionine = N(4)-methylcytidine(1402) in 16S rRNA + S-adenosyl-L-homocysteine + H(+). Specifically methylates the N4 position of cytidine in position 1402 (C1402) of 16S rRNA. The sequence is that of Ribosomal RNA small subunit methyltransferase H from Campylobacter hominis (strain ATCC BAA-381 / DSM 21671 / CCUG 45161 / LMG 19568 / NCTC 13146 / CH001A).